Reading from the N-terminus, the 132-residue chain is D-ribose pyranase (132 aa).

Residue His-20 is the Proton donor of the active site. Residues Asp-28, His-99, and 121–123 contribute to the substrate site; that span reads YAN.

The protein belongs to the RbsD / FucU family. RbsD subfamily. As to quaternary structure, homodecamer.

It localises to the cytoplasm. It carries out the reaction beta-D-ribopyranose = beta-D-ribofuranose. The protein operates within carbohydrate metabolism; D-ribose degradation; D-ribose 5-phosphate from beta-D-ribopyranose: step 1/2. Its function is as follows. Catalyzes the interconversion of beta-pyran and beta-furan forms of D-ribose. The polypeptide is D-ribose pyranase (Variovorax paradoxus (strain S110)).